Here is a 495-residue protein sequence, read N- to C-terminus: Protein FAM83F (495 aa).

Ala2 carries the post-translational modification N-acetylalanine. A DUF1669 region spans residues 2–294 (AESQLSCLDE…LYAISEEVNL (293 aa)). A Phosphoserine modification is found at Ser4. Disordered regions lie at residues 341-362 (QQREAGGNVEGQEEGSGGGESA) and 384-495 (PISP…CVIS). The segment covering 447–458 (PAVPSSMASSPS) has biased composition (low complexity). The residue at position 477 (Ser477) is a Phosphoserine.

It belongs to the FAM83 family. Directly interacts (via DUF1669) with CSNK1A1 and CSNK1A1L.

The protein localises to the cell membrane. The polypeptide is Protein FAM83F (Fam83f) (Mus musculus (Mouse)).